Here is a 248-residue protein sequence, read N- to C-terminus: ATP synthase subunit a (248 aa).

The next 5 membrane-spanning stretches (helical) occupy residues G31–G51, V90–F110, I129–S149, V195–F215, and L216–E236.

Belongs to the ATPase A chain family. In terms of assembly, F-type ATPases have 2 components, CF(1) - the catalytic core - and CF(0) - the membrane proton channel. CF(1) has five subunits: alpha(3), beta(3), gamma(1), delta(1), epsilon(1). CF(0) has four main subunits: a, b, b' and c.

The protein localises to the cellular thylakoid membrane. Its function is as follows. Key component of the proton channel; it plays a direct role in the translocation of protons across the membrane. This is ATP synthase subunit a from Synechococcus sp. (strain JA-2-3B'a(2-13)) (Cyanobacteria bacterium Yellowstone B-Prime).